A 430-amino-acid chain; its full sequence is Histidine--tRNA ligase (430 aa).

It belongs to the class-II aminoacyl-tRNA synthetase family. As to quaternary structure, homodimer.

Its subcellular location is the cytoplasm. It catalyses the reaction tRNA(His) + L-histidine + ATP = L-histidyl-tRNA(His) + AMP + diphosphate + H(+). The protein is Histidine--tRNA ligase (hisS) of Chlamydia pneumoniae (Chlamydophila pneumoniae).